Here is a 361-residue protein sequence, read N- to C-terminus: Phospho-N-acetylmuramoyl-pentapeptide-transferase (361 aa).

The next 10 membrane-spanning stretches (helical) occupy residues 28-48, 74-94, 99-119, 133-153, 168-188, 203-223, 236-256, 263-283, 288-308, and 338-358; these read LAII…IKFL, TMGG…LADL, IWIT…DDYA, SKLL…EYLD, LSLD…VGSS, VPIA…GNLI, TGEL…FLWF, VFMG…ISVI, IVLA…ILQV, and KVVI…LSSL.

Belongs to the glycosyltransferase 4 family. MraY subfamily. The cofactor is Mg(2+).

It localises to the cell inner membrane. The catalysed reaction is UDP-N-acetyl-alpha-D-muramoyl-L-alanyl-gamma-D-glutamyl-meso-2,6-diaminopimeloyl-D-alanyl-D-alanine + di-trans,octa-cis-undecaprenyl phosphate = di-trans,octa-cis-undecaprenyl diphospho-N-acetyl-alpha-D-muramoyl-L-alanyl-D-glutamyl-meso-2,6-diaminopimeloyl-D-alanyl-D-alanine + UMP. Its pathway is cell wall biogenesis; peptidoglycan biosynthesis. Functionally, catalyzes the initial step of the lipid cycle reactions in the biosynthesis of the cell wall peptidoglycan: transfers peptidoglycan precursor phospho-MurNAc-pentapeptide from UDP-MurNAc-pentapeptide onto the lipid carrier undecaprenyl phosphate, yielding undecaprenyl-pyrophosphoryl-MurNAc-pentapeptide, known as lipid I. This chain is Phospho-N-acetylmuramoyl-pentapeptide-transferase, found in Rickettsia felis (strain ATCC VR-1525 / URRWXCal2) (Rickettsia azadi).